A 152-amino-acid chain; its full sequence is 3-hydroxyacyl-[acyl-carrier-protein] dehydratase FabZ (152 aa).

H54 is an active-site residue.

It belongs to the thioester dehydratase family. FabZ subfamily.

The protein resides in the cytoplasm. It catalyses the reaction a (3R)-hydroxyacyl-[ACP] = a (2E)-enoyl-[ACP] + H2O. Its function is as follows. Involved in unsaturated fatty acids biosynthesis. Catalyzes the dehydration of short chain beta-hydroxyacyl-ACPs and long chain saturated and unsaturated beta-hydroxyacyl-ACPs. This Roseobacter denitrificans (strain ATCC 33942 / OCh 114) (Erythrobacter sp. (strain OCh 114)) protein is 3-hydroxyacyl-[acyl-carrier-protein] dehydratase FabZ.